Reading from the N-terminus, the 253-residue chain is Aspartic acid-rich protein (253 aa).

The first 22 residues, 1–22 (MYLFIYIFFFFFFFFFFVIVQK), serve as a signal peptide directing secretion. The segment at 211–253 (DDFDEEFDDDDDDDDDDDDDDDDDDKDDDLDGDDDGNNDDNDD) is disordered.

Belongs to the nucleosome assembly protein (NAP) family.

The protein is Aspartic acid-rich protein of Plasmodium falciparum (isolate fcm17 / Senegal).